The sequence spans 258 residues: MVLIRVLANLLILQLSYAQKSSELIIGGHPCNINEHRSLVVLFNSSGLLCSGTLINKEWVLTAAHCDSNNFQLLFGVHSKKVLNEDEQTRDPKEKFICPNKKKDDEKDKDIMLIRLDSSVSNSEHIAPLSLPSSPPSVGSACRVMGWGKTIPTKDTYPDVPHCANINILDHAVCRAAYSNLLEKSKTLCAGILQGGKDTCQFDSGGPLICNGQVQGIVSWGGHPCGQPHALGVYTNVFNYTDWIQSIIAGNTDATCPP.

A signal peptide spans M1–A18. A propeptide spanning residues Q19–L24 is cleaved from the precursor. One can recognise a Peptidase S1 domain in the interval I25–A249. Intrachain disulfides connect C31–C163, C50–C66, C98–C256, C142–C210, C174–C189, and C200–C225. N-linked (GlcNAc...) asparagine glycosylation occurs at N44. Active-site charge relay system residues include H65 and D110. S204 (charge relay system) is an active-site residue. N-linked (GlcNAc...) asparagine glycosylation occurs at N239.

This sequence belongs to the peptidase S1 family. Snake venom subfamily. As to quaternary structure, monomer. In terms of tissue distribution, expressed by the venom gland.

Its subcellular location is the secreted. Functionally, snake venom serine protease that may act in the hemostasis system of the prey. The sequence is that of Snake venom serine protease 3 from Protobothrops jerdonii (Jerdon's pitviper).